The sequence spans 33 residues: DELTA-pseudomyrmecitoxin-Pp1a subunit B (33 aa).

In terms of assembly, heterodimer composed of subunit A and subunit B (DELTA-PSDTX-Pp1a); disulfide-linked. As to expression, expressed by the venom gland.

It is found in the secreted. Functionally, this heterodimer has insecticidal and cytotoxic properties. Induces immediate paralysis when injected into blowflies (Lucilia cuprina), and then death within 24 hours. Also inhibits the growth of Aedes albopictus mosquito C6/36 cells. This chain is DELTA-pseudomyrmecitoxin-Pp1a subunit B, found in Pseudomyrmex penetrator (Ant).